The following is a 292-amino-acid chain: MFKKALFILSLCPSFALAQSYVVYDFTHNRVLESHASDSIQPIASVTKLMTANVFLENNKNPNCRIAITKEDTDRIKGTGTKLPKNIPISCNELLKAMLVHSDNYAAHALSRAAGISRRQFIKKMNEKAHQLGMYSTRFHDSSGLSSYNISSPMDLVKLAKYSLNKSDIKRLSNLSATYIQAGKQKLYIKNTNKLVRDEIFDAAVNKTGYIQESGYNLVFINKHRCKNATIGVISLNNTSSAYRSSFTKSKLEKFGCTALNGRTIRDVAGEAQYEDGYDEVGFNTLIQKLSK.

The signal sequence occupies residues 1–18; the sequence is MFKKALFILSLCPSFALA. Residue serine 45 is the Acyl-ester intermediate of the active site. The active-site Proton acceptor is lysine 48. Serine 102 is an active-site residue. Lysine 207 contributes to the substrate binding site.

The protein belongs to the peptidase S11 family.

The protein localises to the periplasm. Its function is as follows. Cell wall formation. May play a specialized role in remodeling the cell wall. Specifically hydrolyzes the DD-diaminopimelate-alanine bonds in high-molecular-mass murein sacculi. This Haemophilus influenzae (strain ATCC 51907 / DSM 11121 / KW20 / Rd) protein is D-alanyl-D-alanine endopeptidase (pbpG).